Reading from the N-terminus, the 914-residue chain is TRPM8 channel-associated factor 3 (914 aa).

Residues 533–832 (NSWVSTGLYL…TYLQLQEGFG (300 aa)) enclose the Peptidase M60 domain.

The protein belongs to the TCAF family. Prostate-specific. Present in both dorso-lateral and anterior prostate.

Its function is as follows. May play a role in the regulation of the cation channel TRPM8 activity. The protein is TRPM8 channel-associated factor 3 of Mus musculus (Mouse).